Consider the following 468-residue polypeptide: 6-phospho-beta-galactosidase (468 aa).

Residues Q19, H116, N159, E160, and N297 each contribute to the D-galactose 6-phosphate site. E160 (proton donor) is an active-site residue. The Nucleophile role is filled by E375. The D-galactose 6-phosphate site is built by S428, W429, K435, and Y437.

Belongs to the glycosyl hydrolase 1 family.

It carries out the reaction a 6-phospho-beta-D-galactoside + H2O = D-galactose 6-phosphate + an alcohol. It participates in carbohydrate metabolism; lactose degradation; D-galactose 6-phosphate and beta-D-glucose from lactose 6-phosphate: step 1/1. The polypeptide is 6-phospho-beta-galactosidase (Streptococcus pyogenes serotype M12 (strain MGAS2096)).